A 310-amino-acid polypeptide reads, in one-letter code: Solute carrier family 25 member 47 (310 aa).

Solcar repeat units lie at residues 1–80 (MDFV…CLAH), 93–208 (PTKA…LCEW), and 217–304 (PDVL…VLRL). Helical transmembrane passes span 3 to 23 (FVAGAIGGVCGVAVGYPLDTV), 55 to 75 (GLSLPVCTVSLVSSVSFGTYH), 98 to 114 (ITLSGCASGLVRVFLTS), 194 to 210 (SFATYFLSYAMLCEWLT), 219 to 239 (VLGVLVAGGCAGVLAWAVATP), and 280 to 298 (LALNCCRAFPVNMVVFVAY).

The protein belongs to the mitochondrial carrier (TC 2.A.29) family. Specifically expressed in liver (at protein level).

The protein resides in the mitochondrion inner membrane. It localises to the mitochondrion outer membrane. It catalyses the reaction NAD(+)(in) = NAD(+)(out). It carries out the reaction acetyl-CoA(in) = acetyl-CoA(out). In terms of biological role, mitochondrial NAD(+) transporter that acts as a 'metabolic gate' in hepatic lipogenesis. Provides NAD(+) substrate to mitochondrial SIRT3 deacetylase and enables its NAD(+)-dependent activities in mitochondrial energy metabolism. This triggers downstream activation of PRKAA1/AMPK-alpha signaling cascade that negatively regulates sterol regulatory element-binding protein (SREBP) transcriptional activities and ATP-consuming lipogenesis to restore cellular energy balance. May transport other mitochondrial metabolites having an aromatic nucleotide and phosphate groups, such as acetyl-CoA. Does not transport amino acids. The transport mechanism remains to be elucidated. In Mus musculus (Mouse), this protein is Solute carrier family 25 member 47.